Consider the following 202-residue polypeptide: Endothelin-1 (202 aa).

Positions 1–23 are cleaved as a signal peptide; the sequence is MDYFSMMVSLLLVAFHGAPETAA. The segment at 24 to 49 is disordered; that stretch reads SGTELSTGAENPGEKPPASAPWRPRR. Positions 24–50 are excised as a propeptide; the sequence is SGTELSTGAENPGEKPPASAPWRPRRS. 2 cysteine pairs are disulfide-bonded: Cys-53–Cys-67 and Cys-55–Cys-63. The propeptide occupies 74 to 202; it reads VNTPGHIVPY…EQKVTHNRTH (129 aa). Residues 110–124 form an endothelin-like region; it reads CQCTSPHDKKCWNFC.

This sequence belongs to the endothelin/sarafotoxin family.

The protein localises to the secreted. Endothelins are endothelium-derived vasoconstrictor peptides. Probable ligand for G-protein coupled receptors EDNRA and EDNRB which activates PTK2B, BCAR1, BCAR3 and, GTPases RAP1 and RHOA cascade in glomerular mesangial cells. Also binds the DEAR/FBXW7-AS1 receptor. Promotes mesenteric arterial wall remodeling via activation of ROCK signaling and subsequent colocalization of NFATC3 with F-actin filaments. NFATC3 then translocates to the nucleus where it subsequently promotes the transcription of the smooth muscle hypertrophy and differentiation marker ACTA2. The polypeptide is Endothelin-1 (EDN1) (Oryctolagus cuniculus (Rabbit)).